A 102-amino-acid chain; its full sequence is NADH-quinone oxidoreductase subunit K 1 (102 aa).

The next 3 helical transmembrane spans lie at 6–26, 31–51, and 65–85; these read LNAYVALSAVLFALGGIGVLV, LAILMCIELMLNAANLLFVAF, and FLVITVAAAEVAIGLALTVLL.

The protein belongs to the complex I subunit 4L family. In terms of assembly, NDH-1 is composed of 14 different subunits. Subunits NuoA, H, J, K, L, M, N constitute the membrane sector of the complex.

The protein localises to the cell membrane. The catalysed reaction is a quinone + NADH + 5 H(+)(in) = a quinol + NAD(+) + 4 H(+)(out). Its function is as follows. NDH-1 shuttles electrons from NADH, via FMN and iron-sulfur (Fe-S) centers, to quinones in the respiratory chain. The immediate electron acceptor for the enzyme in this species is believed to be a menaquinone. Couples the redox reaction to proton translocation (for every two electrons transferred, four hydrogen ions are translocated across the cytoplasmic membrane), and thus conserves the redox energy in a proton gradient. The sequence is that of NADH-quinone oxidoreductase subunit K 1 from Symbiobacterium thermophilum (strain DSM 24528 / JCM 14929 / IAM 14863 / T).